Here is a 115-residue protein sequence, read N- to C-terminus: uncharacterized protein (115 aa).

Positions 1–91 constitute an HTH arsR-type domain; it reads MTEYNANSIR…SELEGFKNVS (91 aa). The H-T-H motif DNA-binding region spans 30-53; sequence ASLISHTLLLSYATVLRHLRILND.

Functionally, essential for virus function. This is an uncharacterized protein from Saccharolobus solfataricus (Sulfolobus solfataricus).